The primary structure comprises 184 residues: MANQIYLFSLICLSVLLCQSYTVSSFQKSLDLAKPCKRFVLHLHDIAYDGDNAANATSAAIVNPLGLGDFSFGKFVIMDDPVTMDQNYLSKPVARVQGFFCYHGKATYDAWIAWTVVFNSTQHKGAFTIMGENPFMEPTRDLPIVGGTGDFIMTRGIATLTTDHIDGSKYFRVKLDIKLYECYH.

A signal peptide spans 1–20; it reads MANQIYLFSLICLSVLLCQS. A disulfide bridge links C36 with C182. N55 and N119 each carry an N-linked (GlcNAc...) asparagine glycan.

It belongs to the plant dirigent protein family. Homodimer.

Its subcellular location is the secreted. It is found in the extracellular space. The protein localises to the apoplast. Dirigent proteins impart stereoselectivity on the phenoxy radical-coupling reaction, yielding optically active lignans from two molecules of coniferyl alcohol in the biosynthesis of lignans, flavonolignans, and alkaloids and thus plays a central role in plant secondary metabolism. In Arabidopsis thaliana (Mouse-ear cress), this protein is Dirigent protein 14 (DIR14).